Consider the following 464-residue polypeptide: Cysteine--tRNA ligase (464 aa).

Cys-29 serves as a coordination point for Zn(2+). The 'HIGH' region signature appears at 31-41 (PTVYDFAHIGN). Positions 224, 249, and 253 each coordinate Zn(2+). Positions 282–286 (KMSKS) match the 'KMSKS' region motif. Residue Lys-285 coordinates ATP.

It belongs to the class-I aminoacyl-tRNA synthetase family. In terms of assembly, monomer. Requires Zn(2+) as cofactor.

Its subcellular location is the cytoplasm. The catalysed reaction is tRNA(Cys) + L-cysteine + ATP = L-cysteinyl-tRNA(Cys) + AMP + diphosphate. This chain is Cysteine--tRNA ligase, found in Afipia carboxidovorans (strain ATCC 49405 / DSM 1227 / KCTC 32145 / OM5) (Oligotropha carboxidovorans).